Here is a 442-residue protein sequence, read N- to C-terminus: Serine hydroxymethyltransferase (442 aa).

Residues Tyr-54, 100–102 (SGS), and His-236 contribute to the pyridoxal 5'-phosphate site. A disulfide bridge connects residues Cys-125 and Cys-364. N6-(pyridoxal phosphate)lysine is present on Lys-237. Pyridoxal 5'-phosphate is bound at residue Gly-272.

This sequence belongs to the SHMT family. As to quaternary structure, homodimer. Pyridoxal 5'-phosphate serves as cofactor.

The protein resides in the cytoplasm. The protein localises to the mitochondrion matrix. Its subcellular location is the plastid. It is found in the apicoplast. It localises to the nucleus. It carries out the reaction (6R)-5,10-methylene-5,6,7,8-tetrahydrofolate + glycine + H2O = (6S)-5,6,7,8-tetrahydrofolate + L-serine. Its pathway is one-carbon metabolism; tetrahydrofolate interconversion. With respect to regulation, redox regulation; active in reducing conditions, inactive in oxidizing conditions. The reduction of the cysteine pairs allows the access binding of the tetrahydrofolate substrate to its binding site. This mechanism appears to be unique to Plasmodium species. Its function is as follows. Catalyzes the interconversion of serine to glycine accompanied with the production of 5,10-methylenetetrahydrofolate, a source of one-carbon units used by thymidylate synthase to convert dUMP to dTMP for DNA synthesis. Binds to its own mRNA and to the mRNA of bifunctional dihydrofolate reductase-thymidylate synthase (DHFR-TS) in vitro; the physiological relevance of this interaction is not clear. In Plasmodium falciparum (isolate 3D7), this protein is Serine hydroxymethyltransferase.